A 174-amino-acid chain; its full sequence is UPF0398 protein YfdB (174 aa).

This sequence belongs to the UPF0398 family.

In Lactococcus lactis subsp. lactis (strain IL1403) (Streptococcus lactis), this protein is UPF0398 protein YfdB (yfdB).